A 389-amino-acid chain; its full sequence is Alanine racemase (389 aa).

Lys48 functions as the Proton acceptor; specific for D-alanine in the catalytic mechanism. Position 48 is an N6-(pyridoxal phosphate)lysine (Lys48). Arg144 lines the substrate pocket. The Proton acceptor; specific for L-alanine role is filled by Tyr281. Residue Met329 coordinates substrate.

The protein belongs to the alanine racemase family. Pyridoxal 5'-phosphate is required as a cofactor.

It carries out the reaction L-alanine = D-alanine. Its pathway is amino-acid biosynthesis; D-alanine biosynthesis; D-alanine from L-alanine: step 1/1. Functionally, catalyzes the interconversion of L-alanine and D-alanine. May also act on other amino acids. This Leptospira interrogans serogroup Icterohaemorrhagiae serovar Lai (strain 56601) protein is Alanine racemase (alr).